A 238-amino-acid polypeptide reads, in one-letter code: Pre-protein VI (238 aa).

Positions 1–33 are excised as a propeptide; it reads MDAVNFSILAPRYGSHPMMSAWSGIGTSDMNGG. Residues 34-54 form an amphipathic alpha-helix essential for membrane lytic activity region; the sequence is AFNWGGIWSGIKNFGSNVKNW. An involved in endosomal membrane lysis region spans residues 36–53; sequence NWGGIWSGIKNFGSNVKN. An interaction with hexon protein region spans residues 48–74; it reads GSNVKNWGSRAWNSQTGKLLRQKLNDT. Positions 67–76 match the Nuclear export signal motif; the sequence is LRQKLNDTKV. The short motif at 153–156 is the PPXY motif element; that stretch reads PPSY. The segment at 187–212 is disordered; it reads TLELKPSDQPPPYSPQSSNMPVTAPV. A Nuclear export signal motif is present at residues 219–230; the sequence is GTLANIVGVGLS. The tract at residues 221-227 is interaction with hexon protein; it reads LANIVGV. Positions 228–238 are binds to importin alpha/beta, involved in hexon nuclear import; the sequence is GLSNVKRRRCF. The Nuclear localization signal motif lies at 233 to 236; sequence KRRR.

The protein belongs to the adenoviridae protein VI family. Interacts with hexon protein; this interaction allows nuclear import of hexon trimers and possibly pre-capsid assembly. Interacts (via C-terminal NLS) with importin alpha/beta. As to quaternary structure, interacts (via PPxY motif) with host NEDD4 ubiquitine ligase; this interaction might play a role in virus intracellular transport during entry. Part of a complex composed of the core-capsid bridging protein, the endosome lysis protein VI and the hexon-linking protein VIII; these interactions bridge the virus core to the capsid. Interacts with peripentonal hexons; this interaction stabilizes the capsid by gluing two peripentonal hexons together and joining them with an adjacent group-of-nine hexon. In terms of assembly, heterodimer with the viral protease; disulfide-linked. Interacts with the viral protease. Post-translationally, ubiquitinated by Nedd4 following partial capsid disassembly; which might play a role in intracellular virus movement during entry. Contains the major nuclear import and export signals. Proteolytically removed during virion maturation. The processing of the C-terminus turns the precursor into a mature viral structural protein and abrogates its ability to promote hexon import and act as a potential chaperone protein.

Its subcellular location is the host nucleus. The protein localises to the host cytoplasm. It localises to the virion. Functionally, during virus assembly, promotes hexon trimers nuclear import through nuclear pore complexes via an importin alpha/beta-dependent mechanism. By analogy to herpesviruses capsid assembly, might act as a chaperone to promote the formation of the icosahedral capsid. Structural component of the virion that provides increased stability to the particle shell through its interaction with the core-capsid bridging protein and the hexon-linking protein VIII. Fibers shedding during virus entry into host cell allows the endosome lysis protein to be exposed as a membrane-lytic peptide. Exhibits pH-independent membrane fragmentation activity and probably mediates viral rapid escape from host endosome via organellar membrane lysis. It is not clear if it then remains partially associated with the capsid and involved in the intracellular microtubule-dependent transport of capsid to the nucleus, or if it is lost during endosomal penetration. In terms of biological role, cofactor that activates the viral protease. Binds to viral protease in a 1:1 ratio. This is Pre-protein VI from Canis lupus familiaris (Dog).